The following is a 118-amino-acid chain: D-dopachrome decarboxylase (118 aa).

Proline 2 is subject to N-acetylproline. Lysine 33 carries the post-translational modification N6-acetyllysine.

It belongs to the MIF family. In terms of assembly, homotrimer.

It localises to the cytoplasm. The enzyme catalyses D-dopachrome + H(+) = 5,6-dihydroxyindole + CO2. Its function is as follows. Tautomerization of D-dopachrome with decarboxylation to give 5,6-dihydroxyindole (DHI). The protein is D-dopachrome decarboxylase (DDT) of Bos taurus (Bovine).